A 360-amino-acid polypeptide reads, in one-letter code: Peptide chain release factor 1 (360 aa).

Position 235 is an N5-methylglutamine (Gln-235). A disordered region spans residues 284 to 313 (AKRQQAEASTRRNLLGSGDRSDRNRTYNFP).

The protein belongs to the prokaryotic/mitochondrial release factor family. Post-translationally, methylated by PrmC. Methylation increases the termination efficiency of RF1.

Its subcellular location is the cytoplasm. Its function is as follows. Peptide chain release factor 1 directs the termination of translation in response to the peptide chain termination codons UAG and UAA. The sequence is that of Peptide chain release factor 1 from Salmonella agona (strain SL483).